The following is a 404-amino-acid chain: Metacaspase-1 (404 aa).

The segment at 1–97 (MHHHHQQPSY…NPQAFGHGAP (97 aa)) is disordered. Active-site residues include H195 and C251.

Belongs to the peptidase C14B family.

Involved in cell death (apoptosis). This chain is Metacaspase-1 (casA), found in Emericella nidulans (strain FGSC A4 / ATCC 38163 / CBS 112.46 / NRRL 194 / M139) (Aspergillus nidulans).